The following is a 63-amino-acid chain: Large ribosomal subunit protein uL29 (63 aa).

It belongs to the universal ribosomal protein uL29 family.

This is Large ribosomal subunit protein uL29 from Shewanella loihica (strain ATCC BAA-1088 / PV-4).